Consider the following 426-residue polypeptide: MLDSKLVRTQLQDVAARLATRGYQLDVARIEALEAQRKTVQTRTEQLQAERNARSKSIGQAKQRGEDIAPLLADVDRMGSELESGKQELDRIQSELDQLMLSIPNLPHDSVPVGADEEENVEVRRWGTPKAFDFPVQDHVALGEQHGWLDFETAAKLSGARFALMRGPIARLHRALAQFMIDLHTREHGYEEAYTPYLVQAPALQGTGQLPKFEDDLFKISREGEADFYLIPTAEVSLTNIVAGEILDAKQLPLKFVAHTPCFRSEAGASGRDTRGMIRQHQFDKVEMVQIVEPSKSFEALEELTGNAEKVLQLLELPYRVLSLCTGDMGFGATKTYDLEVWVPSQDKYREISSCSNCGDFQARRMQARYRNPETGKPELVHTLNGSGLAVGRTLVAVLENYQQADGRILVPEVLKPYMGGIEVIG.

233–235 is a binding site for L-serine; the sequence is TAE. 264 to 266 contributes to the ATP binding site; sequence RSE. Glu-287 provides a ligand contact to L-serine. ATP is bound at residue 351–354; the sequence is EISS. L-serine is bound at residue Ser-387.

Belongs to the class-II aminoacyl-tRNA synthetase family. Type-1 seryl-tRNA synthetase subfamily. As to quaternary structure, homodimer. The tRNA molecule binds across the dimer.

Its subcellular location is the cytoplasm. The enzyme catalyses tRNA(Ser) + L-serine + ATP = L-seryl-tRNA(Ser) + AMP + diphosphate + H(+). It catalyses the reaction tRNA(Sec) + L-serine + ATP = L-seryl-tRNA(Sec) + AMP + diphosphate + H(+). The protein operates within aminoacyl-tRNA biosynthesis; selenocysteinyl-tRNA(Sec) biosynthesis; L-seryl-tRNA(Sec) from L-serine and tRNA(Sec): step 1/1. Functionally, catalyzes the attachment of serine to tRNA(Ser). Is also able to aminoacylate tRNA(Sec) with serine, to form the misacylated tRNA L-seryl-tRNA(Sec), which will be further converted into selenocysteinyl-tRNA(Sec). This Stutzerimonas stutzeri (strain A1501) (Pseudomonas stutzeri) protein is Serine--tRNA ligase.